The chain runs to 455 residues: Xylan O-acetyltransferase 3 (455 aa).

Residues 1–15 (MSKPQQQSPPSTTTT) show a composition bias toward low complexity. The interval 1 to 32 (MSKPQQQSPPSTTTTSPPPPPPSTPPPASSSR) is disordered. Residues 1-42 (MSKPQQQSPPSTTTTSPPPPPPSTPPPASSSRSLLSALRRSP) are Cytoplasmic-facing. Residues 16–28 (SPPPPPPSTPPPA) show a composition bias toward pro residues. Residues 43–59 (VTTLVAAFFLLALFMYG) form a helical; Signal-anchor for type II membrane protein membrane-spanning segment. Residues 60–455 (EDVRTLAELS…PSTHPSLPPQ (396 aa)) lie on the Lumenal side of the membrane. Asn82, Asn107, and Asn146 each carry an N-linked (GlcNAc...) asparagine glycan. 4 cysteine pairs are disulfide-bonded: Cys96-Cys147, Cys118-Cys183, Cys127-Cys423, and Cys339-Cys419. The GDS motif signature appears at 170–172 (GDS). The active-site Nucleophile is the Ser172. N-linked (GlcNAc...) asparagine glycans are attached at residues Asn278 and Asn348. Asp418 (proton donor) is an active-site residue. A DXXH motif motif is present at residues 418–421 (DCIH). His421 serves as the catalytic Proton acceptor.

It belongs to the PC-esterase family. TBL subfamily. Highly expressed in leaves. Expressed in roots, stems and inflorescences.

The protein resides in the golgi apparatus membrane. Xylan acetyltransferase required for 2-O- and 3-O-monoacetylation of xylosyl residues in xylan. Catalyzes the 2-O-acetylation of xylan, followed by nonenzymatic acetyl migration to the O-3 position, resulting in products that are monoacetylated at both O-2 and O-3 positions. This chain is Xylan O-acetyltransferase 3, found in Oryza sativa subsp. japonica (Rice).